The following is a 281-amino-acid chain: Putative E3 ubiquitin-protein ligase SINA-like 6 (281 aa).

Positions 1–26 (MVGVLLSERNGSQKRHCSSISSDDGR) are disordered. The RING-type zinc finger occupies 45 to 81 (CPICYQALKIPVFQCGNGHLACSSCCPKLRNKCPACA). Residues 95 to 280 (VLESVLVPCR…MMLCINELKQ (186 aa)) form an SBD region. The segment at 98–156 (SVLVPCRYADLGCTKTIYYGRESTHEKICNFSPCSCPVQGCNYTGSYKDLYEHYDLTHS) adopts an SIAH-type zinc-finger fold. 8 residues coordinate Zn(2+): C103, C110, H122, C126, C133, C138, H150, and H155.

This sequence belongs to the SINA (Seven in absentia) family.

The catalysed reaction is S-ubiquitinyl-[E2 ubiquitin-conjugating enzyme]-L-cysteine + [acceptor protein]-L-lysine = [E2 ubiquitin-conjugating enzyme]-L-cysteine + N(6)-ubiquitinyl-[acceptor protein]-L-lysine.. It participates in protein modification; protein ubiquitination. E3 ubiquitin-protein ligase that mediates ubiquitination and subsequent proteasomal degradation of target proteins. E3 ubiquitin ligases accept ubiquitin from an E2 ubiquitin-conjugating enzyme in the form of a thioester and then directly transfers the ubiquitin to targeted substrates. It probably triggers the ubiquitin-mediated degradation of different substrates. The chain is Putative E3 ubiquitin-protein ligase SINA-like 6 from Arabidopsis thaliana (Mouse-ear cress).